The chain runs to 683 residues: DNA-directed RNA polymerase subunit beta' (683 aa).

Zn(2+) contacts are provided by Cys-69, Cys-71, Cys-87, and Cys-90. The Mg(2+) site is built by Asp-489, Asp-491, and Asp-493.

Belongs to the RNA polymerase beta' chain family. RpoC1 subfamily. In plastids the minimal PEP RNA polymerase catalytic core is composed of four subunits: alpha, beta, beta', and beta''. When a (nuclear-encoded) sigma factor is associated with the core the holoenzyme is formed, which can initiate transcription. It depends on Mg(2+) as a cofactor. Requires Zn(2+) as cofactor.

The protein localises to the plastid. Its subcellular location is the chloroplast. It carries out the reaction RNA(n) + a ribonucleoside 5'-triphosphate = RNA(n+1) + diphosphate. Its function is as follows. DNA-dependent RNA polymerase catalyzes the transcription of DNA into RNA using the four ribonucleoside triphosphates as substrates. In Triticum aestivum (Wheat), this protein is DNA-directed RNA polymerase subunit beta'.